Here is a 158-residue protein sequence, read N- to C-terminus: Lipoprotein signal peptidase (158 aa).

Transmembrane regions (helical) follow at residues 7–27 (LFWI…YWVV), 38–58 (ILPG…FSLF), 67–87 (WLSL…PVLE), and 95–115 (GLIL…GYVV). Active-site residues include D116 and D132. The helical transmembrane segment at 125–145 (FAVFNMADSFISIGIVCLLLA) threads the bilayer.

It belongs to the peptidase A8 family.

The protein resides in the cell inner membrane. The enzyme catalyses Release of signal peptides from bacterial membrane prolipoproteins. Hydrolyzes -Xaa-Yaa-Zaa-|-(S,diacylglyceryl)Cys-, in which Xaa is hydrophobic (preferably Leu), and Yaa (Ala or Ser) and Zaa (Gly or Ala) have small, neutral side chains.. Its pathway is protein modification; lipoprotein biosynthesis (signal peptide cleavage). In terms of biological role, this protein specifically catalyzes the removal of signal peptides from prolipoproteins. The polypeptide is Lipoprotein signal peptidase (Trichormus variabilis (strain ATCC 29413 / PCC 7937) (Anabaena variabilis)).